The chain runs to 290 residues: Poly-beta-1,6-N-acetyl-D-glucosamine N-deacetylase (290 aa).

An N-terminal signal peptide occupies residues methionine 1–alanine 28. One can recognise a NodB homology domain in the interval arginine 114 to aspartate 290.

The protein belongs to the polysaccharide deacetylase family.

It localises to the secreted. Its subcellular location is the cell wall. Functionally, catalyzes the N-deacetylation of poly-beta-1,6-N-acetyl-D-glucosamine (PNAG, also referred to as PIA), a biofilm adhesin polysaccharide. N-deacetylation is crucial for attachment of the polysaccharide to the bacterial cell surface; it leads to the introduction of positive charges in the otherwise neutral PIA polymer, allowing electrostatic interactions. The protein is Poly-beta-1,6-N-acetyl-D-glucosamine N-deacetylase (icaB) of Staphylococcus aureus (strain NCTC 8325 / PS 47).